Here is a 327-residue protein sequence, read N- to C-terminus: Tagatose 1,6-diphosphate aldolase 2 (327 aa).

Belongs to the aldolase LacD family.

It catalyses the reaction D-tagatofuranose 1,6-bisphosphate = D-glyceraldehyde 3-phosphate + dihydroxyacetone phosphate. The protein operates within carbohydrate metabolism; D-tagatose 6-phosphate degradation; D-glyceraldehyde 3-phosphate and glycerone phosphate from D-tagatose 6-phosphate: step 2/2. The sequence is that of Tagatose 1,6-diphosphate aldolase 2 (lacD2) from Streptococcus pyogenes serotype M1.